Here is a 37-residue protein sequence, read N- to C-terminus: Large ribosomal subunit protein bL36 (37 aa).

This sequence belongs to the bacterial ribosomal protein bL36 family.

In Paracidovorax citrulli (strain AAC00-1) (Acidovorax citrulli), this protein is Large ribosomal subunit protein bL36.